The primary structure comprises 293 residues: Indole-3-glycerol phosphate synthase (293 aa).

This sequence belongs to the TrpC family.

It carries out the reaction 1-(2-carboxyphenylamino)-1-deoxy-D-ribulose 5-phosphate + H(+) = (1S,2R)-1-C-(indol-3-yl)glycerol 3-phosphate + CO2 + H2O. It functions in the pathway amino-acid biosynthesis; L-tryptophan biosynthesis; L-tryptophan from chorismate: step 4/5. The polypeptide is Indole-3-glycerol phosphate synthase (Prochlorococcus marinus (strain SARG / CCMP1375 / SS120)).